A 320-amino-acid polypeptide reads, in one-letter code: Cytochrome c biogenesis protein CcsA (320 aa).

A run of 7 helical transmembrane segments spans residues 14–34 (VLLL…WCFW), 68–88 (GHFP…ACTL), 101–121 (LVAA…SFAL), 146–166 (VIMV…AVLM), 226–246 (TITV…VWAN), 260–277 (TWAL…HTRL), and 289–309 (VASL…LLGI).

It belongs to the CcmF/CycK/Ccl1/NrfE/CcsA family. In terms of assembly, may interact with ccs1.

It is found in the cellular thylakoid membrane. Its function is as follows. Required during biogenesis of c-type cytochromes (cytochrome c6 and cytochrome f) at the step of heme attachment. The sequence is that of Cytochrome c biogenesis protein CcsA from Synechococcus sp. (strain WH7803).